Consider the following 93-residue polypeptide: MKLLNFKIIIIQDVLCNNKDYKDNNYNNNKIERLTTSALSRSANRIPTTSSTSTSGTIPTTTITPRQSIINNRNQIINKPQKQHHLLVQIEIH.

The interval 41-62 (RSANRIPTTSSTSTSGTIPTTT) is disordered. Over residues 46-62 (IPTTSSTSTSGTIPTTT) the composition is skewed to low complexity.

This is an uncharacterized protein from Dictyostelium discoideum (Social amoeba).